Here is a 77-residue protein sequence, read N- to C-terminus: Sec-independent protein translocase protein TatA (77 aa).

The chain crosses the membrane as a helical span at residues 1–21; it reads MGGLSIWHWLIVLLIVALVFG. The disordered stretch occupies residues 40 to 77; sequence KDGMREGEAPADPQQLPRSGSVNVDAKDATRSSDSNKA. Basic and acidic residues predominate over residues 64–77; that stretch reads DAKDATRSSDSNKA.

The protein belongs to the TatA/E family. The Tat system comprises two distinct complexes: a TatABC complex, containing multiple copies of TatA, TatB and TatC subunits, and a separate TatA complex, containing only TatA subunits. Substrates initially bind to the TatABC complex, which probably triggers association of the separate TatA complex to form the active translocon.

It is found in the cell inner membrane. Its function is as follows. Part of the twin-arginine translocation (Tat) system that transports large folded proteins containing a characteristic twin-arginine motif in their signal peptide across membranes. TatA could form the protein-conducting channel of the Tat system. This is Sec-independent protein translocase protein TatA from Burkholderia thailandensis (strain ATCC 700388 / DSM 13276 / CCUG 48851 / CIP 106301 / E264).